A 67-amino-acid chain; its full sequence is Small ribosomal subunit protein eS27 (67 aa).

Residues Cys22, Cys25, Cys41, and Cys44 each contribute to the Zn(2+) site. Residues 22–44 (CPDCGNEQITFSHAAMVVRCLVC) form a C4-type zinc finger.

Belongs to the eukaryotic ribosomal protein eS27 family. As to quaternary structure, part of the 30S ribosomal subunit. Zn(2+) is required as a cofactor.

The sequence is that of Small ribosomal subunit protein eS27 from Pyrobaculum aerophilum (strain ATCC 51768 / DSM 7523 / JCM 9630 / CIP 104966 / NBRC 100827 / IM2).